A 466-amino-acid polypeptide reads, in one-letter code: Arginine biosynthesis bifunctional protein ArgJ, mitochondrial (466 aa).

Substrate-binding residues include Thr-194, Lys-223, Thr-234, Glu-321, Asn-461, and Thr-466. Thr-234 (nucleophile) is an active-site residue.

Belongs to the ArgJ family. In terms of assembly, heterodimer of an alpha and a beta chain. Post-translationally, the alpha and beta chains are autoproteolytically processed from a single precursor protein within the mitochondrion.

It localises to the mitochondrion matrix. The catalysed reaction is N(2)-acetyl-L-ornithine + L-glutamate = N-acetyl-L-glutamate + L-ornithine. It catalyses the reaction L-glutamate + acetyl-CoA = N-acetyl-L-glutamate + CoA + H(+). The protein operates within amino-acid biosynthesis; L-arginine biosynthesis; L-ornithine and N-acetyl-L-glutamate from L-glutamate and N(2)-acetyl-L-ornithine (cyclic): step 1/1. It functions in the pathway amino-acid biosynthesis; L-arginine biosynthesis; N(2)-acetyl-L-ornithine from L-glutamate: step 1/4. In terms of biological role, catalyzes two activities which are involved in the cyclic version of arginine biosynthesis: the synthesis of acetylglutamate from glutamate and acetyl-CoA, and of ornithine by transacetylation between acetylornithine and glutamate. In Aspergillus flavus (strain ATCC 200026 / FGSC A1120 / IAM 13836 / NRRL 3357 / JCM 12722 / SRRC 167), this protein is Arginine biosynthesis bifunctional protein ArgJ, mitochondrial.